Here is a 535-residue protein sequence, read N- to C-terminus: CTP synthase (535 aa).

Residues 1–267 (MTKYIFVTGG…DQIVCDHLKL (267 aa)) form an amidoligase domain region. Residue Ser13 coordinates CTP. Ser13 lines the UTP pocket. Residue 14 to 19 (SLGKGI) participates in ATP binding. Tyr54 lines the L-glutamine pocket. Asp71 contributes to the ATP binding site. 2 residues coordinate Mg(2+): Asp71 and Glu141. Residues 148-150 (DIE), 188-193 (KTKPTQ), and Lys224 contribute to the CTP site. UTP is bound by residues 188 to 193 (KTKPTQ) and Lys224. Residue 240–242 (RDA) participates in ATP binding. The Glutamine amidotransferase type-1 domain occupies 292–534 (KIALVGKYVE…VRASITNKES (243 aa)). L-glutamine is bound at residue Gly354. The active-site Nucleophile; for glutamine hydrolysis is the Cys381. Residues 382 to 385 (LGMQ), Glu405, and Arg462 contribute to the L-glutamine site. Catalysis depends on residues His507 and Glu509.

Belongs to the CTP synthase family. Homotetramer.

It carries out the reaction UTP + L-glutamine + ATP + H2O = CTP + L-glutamate + ADP + phosphate + 2 H(+). The enzyme catalyses L-glutamine + H2O = L-glutamate + NH4(+). The catalysed reaction is UTP + NH4(+) + ATP = CTP + ADP + phosphate + 2 H(+). It participates in pyrimidine metabolism; CTP biosynthesis via de novo pathway; CTP from UDP: step 2/2. With respect to regulation, allosterically activated by GTP, when glutamine is the substrate; GTP has no effect on the reaction when ammonia is the substrate. The allosteric effector GTP functions by stabilizing the protein conformation that binds the tetrahedral intermediate(s) formed during glutamine hydrolysis. Inhibited by the product CTP, via allosteric rather than competitive inhibition. Catalyzes the ATP-dependent amination of UTP to CTP with either L-glutamine or ammonia as the source of nitrogen. Regulates intracellular CTP levels through interactions with the four ribonucleotide triphosphates. In Bacillus cereus (strain ATCC 14579 / DSM 31 / CCUG 7414 / JCM 2152 / NBRC 15305 / NCIMB 9373 / NCTC 2599 / NRRL B-3711), this protein is CTP synthase.